The following is a 303-amino-acid chain: Ribonucleoside-diphosphate reductase small subunit (303 aa).

The Fe cation site is built by aspartate 60, glutamate 90, and histidine 93. Tyrosine 97 is an active-site residue. Residues leucine 147–leucine 167 form a helical membrane-spanning segment. Residues glutamate 153, glutamate 187, and histidine 190 each contribute to the Fe cation site.

It belongs to the ribonucleoside diphosphate reductase small chain family. Heterotetramer composed of a homodimer of the large subunit (R1) and a homodimer of the small subunit (R2). Larger multisubunit protein complex are also active, composed of (R1)n(R2)n. It depends on Fe cation as a cofactor.

The protein resides in the host membrane. The enzyme catalyses a 2'-deoxyribonucleoside 5'-diphosphate + [thioredoxin]-disulfide + H2O = a ribonucleoside 5'-diphosphate + [thioredoxin]-dithiol. In terms of biological role, ribonucleoside-diphosphate reductase holoenzyme provides the precursors necessary for viral DNA synthesis. Allows virus growth in non-dividing cells, as well as reactivation from latency in infected hosts. Catalyzes the biosynthesis of deoxyribonucleotides from the corresponding ribonucleotides. The sequence is that of Ribonucleoside-diphosphate reductase small subunit from Suid herpesvirus 1 (strain Kaplan) (SuHV-1).